We begin with the raw amino-acid sequence, 629 residues long: tRNA uridine 5-carboxymethylaminomethyl modification enzyme MnmG (629 aa).

Residues 14 to 19 (GAGHAG), V126, and S181 contribute to the FAD site. Residue 273-287 (GPRYCPSIEDKVVRF) coordinates NAD(+). Position 370 (Q370) interacts with FAD.

This sequence belongs to the MnmG family. In terms of assembly, homodimer. Heterotetramer of two MnmE and two MnmG subunits. Requires FAD as cofactor.

It is found in the cytoplasm. Its function is as follows. NAD-binding protein involved in the addition of a carboxymethylaminomethyl (cmnm) group at the wobble position (U34) of certain tRNAs, forming tRNA-cmnm(5)s(2)U34. This chain is tRNA uridine 5-carboxymethylaminomethyl modification enzyme MnmG, found in Geobacillus kaustophilus (strain HTA426).